Reading from the N-terminus, the 739-residue chain is Malate synthase G (739 aa).

Residues 1–18 (MTEQELLSAQTADNAGTD) show a composition bias toward polar residues. The disordered stretch occupies residues 1–23 (MTEQELLSAQTADNAGTDSTERV). Residues Val-135, 142-143 (RF), Ser-292, and Arg-329 each bind acetyl-CoA. Residue Arg-356 is the Proton acceptor of the active site. Residues Arg-356, Glu-447, and 472–475 (GFLD) contribute to the glyoxylate site. 2 residues coordinate Mg(2+): Glu-447 and Asp-475. Pro-556 contacts acetyl-CoA. Residue Cys-633 is modified to Cysteine sulfenic acid (-SOH). Asp-647 (proton donor) is an active-site residue.

It belongs to the malate synthase family. GlcB subfamily. In terms of assembly, monomer. Mg(2+) serves as cofactor.

It localises to the cytoplasm. It catalyses the reaction glyoxylate + acetyl-CoA + H2O = (S)-malate + CoA + H(+). Its pathway is carbohydrate metabolism; glyoxylate cycle; (S)-malate from isocitrate: step 2/2. Its activity is regulated as follows. Inhibited by oxalate, glycolate and ATP. Involved in the glycolate utilization. Catalyzes the condensation and subsequent hydrolysis of acetyl-coenzyme A (acetyl-CoA) and glyoxylate to form malate and CoA. This Corynebacterium glutamicum (strain ATCC 13032 / DSM 20300 / JCM 1318 / BCRC 11384 / CCUG 27702 / LMG 3730 / NBRC 12168 / NCIMB 10025 / NRRL B-2784 / 534) protein is Malate synthase G.